We begin with the raw amino-acid sequence, 133 residues long: Core atranone cluster (CAC) protein 11 (133 aa).

The protein operates within mycotoxin biosynthesis. In terms of biological role, part of the core atranone cluster (CAC) which products are predicted to catalyze most or all steps of mycotoxin atranone synthesis, starting from geranylgeranyl pyrophosphate (GGPP). The initial cyclization of GGPP to dolabellane is probably performed by the terpene cyclase ATR13. The Baeyer-Villiger oxidation near the end of the atranone synthesis, which converts atranones D and E to atranones F and G is predicted to be catalyzed by the monooxygenase ATR8. Of the CAC's other predicted gene products, the reducing PKS ATR6 might synthesize a polyketide chain. This polyketide is probably transferred onto the atranone backbone by the polyketide transferase ATR5. Other predicted CAC products include 4 oxygenases (ATR2, ATR3, ATR4, and ATR14), 3 short-chain reductases (ATR7, ATR9, and ATR10), and a methyltransferase (ATR12). These may all be involved in the various steps of atranone biosynthesis, although their specific roles must await experimental determination. The chain is Core atranone cluster (CAC) protein 11 from Stachybotrys chlorohalonatus (strain IBT 40285).